A 324-amino-acid chain; its full sequence is Phospho-N-acetylmuramoyl-pentapeptide-transferase (324 aa).

9 helical membrane-spanning segments follow: residues 13-33, 59-79, 85-105, 121-141, 143-163, 179-199, 201-221, 243-263, and 303-323; these read VLSALLMGFAFSMVLGPIFIP, PTMGGLIFFISVTVTMLIIGY, GMVVLYSLIAFGIIGFLDDIL, MILLLLFSIALAYYGYTNIGT, IIIPFMNSKLNLGIFYIPLVV, IDGLASSVTVIVLTFFAIVGF, TGHYQVGVFSIALAGALLGFL, AIATIALILKMPLFIIIVGGI, and VKLVTVFSIITLILCIIGFIA.

Belongs to the glycosyltransferase 4 family. MraY subfamily. Mg(2+) serves as cofactor.

It is found in the cell membrane. The enzyme catalyses UDP-N-acetyl-alpha-D-muramoyl-L-alanyl-gamma-D-glutamyl-meso-2,6-diaminopimeloyl-D-alanyl-D-alanine + di-trans,octa-cis-undecaprenyl phosphate = di-trans,octa-cis-undecaprenyl diphospho-N-acetyl-alpha-D-muramoyl-L-alanyl-D-glutamyl-meso-2,6-diaminopimeloyl-D-alanyl-D-alanine + UMP. Its pathway is cell wall biogenesis; peptidoglycan biosynthesis. In terms of biological role, catalyzes the initial step of the lipid cycle reactions in the biosynthesis of the cell wall peptidoglycan: transfers peptidoglycan precursor phospho-MurNAc-pentapeptide from UDP-MurNAc-pentapeptide onto the lipid carrier undecaprenyl phosphate, yielding undecaprenyl-pyrophosphoryl-MurNAc-pentapeptide, known as lipid I. The polypeptide is Phospho-N-acetylmuramoyl-pentapeptide-transferase (Clostridium botulinum (strain Alaska E43 / Type E3)).